The primary structure comprises 233 residues: 5'-methylthioadenosine/S-adenosylhomocysteine nucleosidase (233 aa).

Glu12 functions as the Proton acceptor in the catalytic mechanism. Residues Gly78, Ile156, and 177 to 178 contribute to the substrate site; that span reads ME. Asp201 acts as the Proton donor in catalysis.

Belongs to the PNP/UDP phosphorylase family. MtnN subfamily.

The enzyme catalyses S-adenosyl-L-homocysteine + H2O = S-(5-deoxy-D-ribos-5-yl)-L-homocysteine + adenine. The catalysed reaction is S-methyl-5'-thioadenosine + H2O = 5-(methylsulfanyl)-D-ribose + adenine. It carries out the reaction 5'-deoxyadenosine + H2O = 5-deoxy-D-ribose + adenine. It participates in amino-acid biosynthesis; L-methionine biosynthesis via salvage pathway; S-methyl-5-thio-alpha-D-ribose 1-phosphate from S-methyl-5'-thioadenosine (hydrolase route): step 1/2. Catalyzes the irreversible cleavage of the glycosidic bond in both 5'-methylthioadenosine (MTA) and S-adenosylhomocysteine (SAH/AdoHcy) to adenine and the corresponding thioribose, 5'-methylthioribose and S-ribosylhomocysteine, respectively. Also cleaves 5'-deoxyadenosine, a toxic by-product of radical S-adenosylmethionine (SAM) enzymes, into 5-deoxyribose and adenine. The protein is 5'-methylthioadenosine/S-adenosylhomocysteine nucleosidase of Listeria monocytogenes serotype 4b (strain CLIP80459).